Reading from the N-terminus, the 323-residue chain is MKPENKIPVLTRLSDEMKAVVNFQQPGLPPWPADGDIETQRQYYLLERRFWNADAPSMTTRTCAVPTPYGDVTTRLYSPQPTSQATLYYLHGGGFILGNLDTHDRIMRLLARYTGCTVIGIDYSLSPQARYPQAIEETVAVCSYFSQHADEYSLNVEKIGFAGDSAGAMLALASALWLRDKHIRCGNVIAILLWYGLYGLQDSVSRRLFGGAWDGLTREDLDMYEKAYLRNDEDRESPWYCLFNNDLTRDVPPCFIASAEFDPLIDDSRLLHKTLQAHQQPCEYKMYPGTLHAFLHYSRMMTIADDALQDGARFFMARMKTPR.

Positions 91–93 (HGG) match the Involved in the stabilization of the negatively charged intermediate by the formation of the oxyanion hole motif. Catalysis depends on residues Ser-165, Asp-262, and His-292.

It belongs to the 'GDXG' lipolytic enzyme family. Homodimer. Interacts with MalT and MelA.

It localises to the cytoplasm. Displays esterase activity towards short chain fatty esters (acyl chain length of up to 8 carbons). Able to hydrolyze triacetylglycerol (triacetin) and tributyrylglycerol (tributyrin), but not trioleylglycerol (triolein) or cholesterol oleate. Negatively regulates MalT activity by antagonizing maltotriose binding. Inhibits MelA galactosidase activity. This is Acetyl esterase from Salmonella dublin (strain CT_02021853).